The sequence spans 284 residues: UPF0276 protein Ping_0944 (284 aa).

The protein belongs to the UPF0276 family.

This Psychromonas ingrahamii (strain DSM 17664 / CCUG 51855 / 37) protein is UPF0276 protein Ping_0944.